A 331-amino-acid polypeptide reads, in one-letter code: Adenosine deaminase (331 aa).

Zn(2+) is bound by residues His12 and His14. 3 residues coordinate substrate: His14, Asp16, and Gly170. His197 serves as a coordination point for Zn(2+). Catalysis depends on Glu200, which acts as the Proton donor. Position 278 (Asp278) interacts with Zn(2+).

Belongs to the metallo-dependent hydrolases superfamily. Adenosine and AMP deaminases family. Adenosine deaminase subfamily. Requires Zn(2+) as cofactor.

It catalyses the reaction adenosine + H2O + H(+) = inosine + NH4(+). The catalysed reaction is 2'-deoxyadenosine + H2O + H(+) = 2'-deoxyinosine + NH4(+). In terms of biological role, catalyzes the hydrolytic deamination of adenosine and 2-deoxyadenosine. This chain is Adenosine deaminase, found in Shewanella woodyi (strain ATCC 51908 / MS32).